We begin with the raw amino-acid sequence, 125 residues long: Mesotocin-neurophysin MT (125 aa).

A signal peptide spans 1 to 19 (MSYTALAVTFFGWLALSSA). A disulfide bridge connects residues Cys-20 and Cys-25. Residue Gly-28 is modified to Glycine amide. Disulfide bonds link Cys-42–Cys-86, Cys-45–Cys-59, Cys-53–Cys-76, Cys-60–Cys-66, Cys-93–Cys-106, Cys-100–Cys-118, and Cys-107–Cys-112.

It belongs to the vasopressin/oxytocin family. As to expression, mesotocin is produced by magnocellular preoptic neurons in the hypothalamus in amphibians, reptiles and birds.

The protein resides in the secreted. In terms of biological role, mesotocin is a diuretic hormone. This Bufo japonicus (Japanese common toad) protein is Mesotocin-neurophysin MT.